Consider the following 959-residue polypeptide: Ribonucleoside-diphosphate reductase large subunit (959 aa).

Substrate is bound by residues threonine 68, 83–84 (SC), and glycine 112. An intrachain disulfide couples cysteine 84 to cysteine 626. Asparagine 270 acts as the Proton acceptor in catalysis. A DOD-type homing endonuclease domain is found at 378 to 508 (LPTLFGNSEH…IQLLLIGMGV (131 aa)). Residue cysteine 611 is the Cysteine radical intermediate of the active site. Glutamate 613 serves as the catalytic Proton acceptor. 751-755 (PTATS) provides a ligand contact to substrate.

The protein belongs to the ribonucleoside diphosphate reductase large chain family. In terms of assembly, heterotetramer composed of a homodimer of the large subunit (R1) and a homodimer of the small subunit (R2). Larger multisubunit protein complex are also active, composed of (R1)n(R2)n.

It carries out the reaction a 2'-deoxyribonucleoside 5'-diphosphate + [thioredoxin]-disulfide + H2O = a ribonucleoside 5'-diphosphate + [thioredoxin]-dithiol. With respect to regulation, under complex allosteric control mediated by deoxynucleoside triphosphates and ATP binding. The type of nucleotide bound at the specificity site determines substrate preference. It seems probable that ATP makes the enzyme reduce CDP and UDP, dGTP favors ADP reduction and dTTP favors GDP reduction. Functionally, ribonucleoside-diphosphate reductase holoenzyme provides the precursors necessary for viral DNA synthesis. Allows virus growth in non-dividing cells. Catalyzes the biosynthesis of deoxyribonucleotides from the corresponding ribonucleotides. This Acheta domesticus (House cricket) protein is Ribonucleoside-diphosphate reductase large subunit.